We begin with the raw amino-acid sequence, 640 residues long: Threonine--tRNA ligase (640 aa).

A TGS domain is found at 1 to 61 (MPTITLPDGS…DSDATLQIIT (61 aa)). A catalytic region spans residues 242-533 (DHRKIGKRLG…LIEHYEGAFP (292 aa)). The Zn(2+) site is built by Cys333, His384, and His510.

It belongs to the class-II aminoacyl-tRNA synthetase family. Homodimer. The cofactor is Zn(2+).

Its subcellular location is the cytoplasm. The catalysed reaction is tRNA(Thr) + L-threonine + ATP = L-threonyl-tRNA(Thr) + AMP + diphosphate + H(+). Its function is as follows. Catalyzes the attachment of threonine to tRNA(Thr) in a two-step reaction: L-threonine is first activated by ATP to form Thr-AMP and then transferred to the acceptor end of tRNA(Thr). Also edits incorrectly charged L-seryl-tRNA(Thr). In Pseudomonas fluorescens (strain Pf0-1), this protein is Threonine--tRNA ligase.